A 102-amino-acid chain; its full sequence is Neuropeptide F (102 aa).

An N-terminal signal peptide occupies residues 1-26 (MCQTMRCILVACVALALLAAGCRVEA). Residues 27–32 (SNSRPP) constitute a propeptide that is removed on maturation. Phe-62 is subject to Phenylalanine amide. A propeptide spanning residues 66–102 (GSLMDILRNHEMDNINLGKNANNGGEFARGFNEEEIF) is cleaved from the precursor.

It belongs to the NPY family. In terms of tissue distribution, expressed in midgut, brain lobes and ventral nerve cord of larvae. Predominantly expressed in two pairs of protocerebral neurons in the larval CNS (at protein level). Intense expression is also seen in the fan-shaped body of the central complex and two lateral areas of the lower part of the central brain that appear to harbor the giant commissural interneurons of the giant fiber pathway (at protein level). Upon glucose feeding, two additional dNPFergic neurons are consistently detected on the ventromedial surface of the subesophageal ganglion (SEG) of third instars larvae. Expressed in a subset of sugar-responsive PAIN neurons in the thoracic body but is absent from other peripheral PAIN neurons.

Its subcellular location is the secreted. Integral part of the sensory system that mediates food signaling, providing the neural basis for the regulation of food response; coordinates larval foraging and social behavior changes during development. Required in dopaminergic (DA) neurons that innervate the mushroom body for satiety to suppress appetitive memory performance; a key factor in the internal state of hunger in the brain. NPF neurons coordinately modulate diverse sensory and motor neurons important for feeding, flight, and locomotion. NPF/NPFR pathway exerts its suppressive effect on larval aversion to diverse stressful stimuli (chemical stress and noxious heat) through attenuation of TRP channel-induced neuronal excitation. NPF neural signaling system plays a physiological role in acute modulation of alcohol sensitivity in adults, rather than a general response to intoxication by sedative agents. Activation and inhibition of the NPF system reduces and enhances ethanol preference, respectively. Sexual experience, the NPF system activity and ethanol consumption are all linked; sexual deprivation is a major contributor to enhanced ethanol preference. In Drosophila melanogaster (Fruit fly), this protein is Neuropeptide F (NPF).